A 169-amino-acid chain; its full sequence is Probable chemoreceptor glutamine deamidase CheD (169 aa).

It belongs to the CheD family.

It catalyses the reaction L-glutaminyl-[protein] + H2O = L-glutamyl-[protein] + NH4(+). Functionally, probably deamidates glutamine residues to glutamate on methyl-accepting chemotaxis receptors (MCPs), playing an important role in chemotaxis. In Solibacter usitatus (strain Ellin6076), this protein is Probable chemoreceptor glutamine deamidase CheD.